Consider the following 406-residue polypeptide: Paracaspase (406 aa).

The tract at residues 193–374 (IGNSKYSQHR…TERKNNNIST (182 aa)) is caspase-like. Active-site residues include H266 and C311.

This sequence belongs to the peptidase C14B family.

Its function is as follows. Not required for DIF-induced autophagic cell death and necrotic cell death. In Dictyostelium discoideum (Social amoeba), this protein is Paracaspase (pcp).